The chain runs to 663 residues: Methionine--tRNA ligase (663 aa).

The 'HIGH' region motif lies at proline 13–histidine 23. 4 residues coordinate Zn(2+): cysteine 144, cysteine 147, cysteine 156, and cysteine 160. The 'KMSKS' region signature appears at lysine 326 to serine 330. ATP is bound at residue lysine 329. One can recognise a tRNA-binding domain in the interval glutamate 565 to arginine 663.

This sequence belongs to the class-I aminoacyl-tRNA synthetase family. MetG type 1 subfamily. In terms of assembly, homodimer. Zn(2+) is required as a cofactor.

Its subcellular location is the cytoplasm. The catalysed reaction is tRNA(Met) + L-methionine + ATP = L-methionyl-tRNA(Met) + AMP + diphosphate. Its function is as follows. Is required not only for elongation of protein synthesis but also for the initiation of all mRNA translation through initiator tRNA(fMet) aminoacylation. The sequence is that of Methionine--tRNA ligase from Methanosphaerula palustris (strain ATCC BAA-1556 / DSM 19958 / E1-9c).